The following is a 75-amino-acid chain: U14-hexatoxin-Mg1a (75 aa).

Positions 1–19 are cleaved as a signal peptide; the sequence is MKLTLFILIVFVVLANVYA. The propeptide occupies 20 to 31; sequence AGISERNIIGGR.

Contains 4 disulfide bonds. In terms of tissue distribution, expressed by the venom gland.

The protein resides in the secreted. Functionally, no toxicity is observed upon intracranial injection into mice and intrathorax injection into crickets. This is U14-hexatoxin-Mg1a from Macrothele gigas (Japanese funnel web spider).